A 328-amino-acid chain; its full sequence is Formimidoylglutamase (328 aa).

Positions 133, 159, 161, 163, 253, and 255 each coordinate Mn(2+).

Belongs to the arginase family. Mn(2+) serves as cofactor.

It carries out the reaction N-formimidoyl-L-glutamate + H2O = formamide + L-glutamate. The protein operates within amino-acid degradation; L-histidine degradation into L-glutamate; L-glutamate from N-formimidoyl-L-glutamate (hydrolase route): step 1/1. Functionally, catalyzes the conversion of N-formimidoyl-L-glutamate to L-glutamate and formamide. The chain is Formimidoylglutamase from Streptococcus pyogenes serotype M5 (strain Manfredo).